The following is a 1249-amino-acid chain: Clustered mitochondria protein homolog (1249 aa).

The tract at residues 1 to 34 (MAQTNGELEHSKAETPEQLTNGNHPEETQEEEQN) is disordered. Residues 321–565 (DITRSQENYL…RVTPLDVMWQ (245 aa)) enclose the Clu domain. Disordered regions lie at residues 610–638 (VETA…EALD) and 874–907 (VPAT…PEKP). Over residues 613-638 (ASKEKSEENAESKEEGSEEKSEEALD) the composition is skewed to basic and acidic residues. TPR repeat units follow at residues 975–1008 (AKLY…TERT), 1017–1050 (ILSY…WKII), and 1059–1092 (ITTM…CESL). Over residues 1178–1191 (TRTLGTKVQPQVGQ) the composition is skewed to polar residues. The tract at residues 1178–1249 (TRTLGTKVQP…KLRGSKKSSA (72 aa)) is disordered. The segment covering 1192–1205 (SAPSASGASSANPS) has biased composition (low complexity).

Belongs to the CLU family. May associate with the eukaryotic translation initiation factor 3 (eIF-3) complex.

The protein resides in the cytoplasm. In terms of biological role, mRNA-binding protein involved in proper cytoplasmic distribution of mitochondria. This chain is Clustered mitochondria protein homolog, found in Aspergillus oryzae (strain ATCC 42149 / RIB 40) (Yellow koji mold).